We begin with the raw amino-acid sequence, 854 residues long: DNA gyrase subunit A (854 aa).

One can recognise a Topo IIA-type catalytic domain in the interval 42-510 (LPEVRDGLKP…ADGQVSDEDL (469 aa)). The active-site O-(5'-phospho-DNA)-tyrosine intermediate is Y129. Positions 537-543 (QKRGGKG) match the GyrA-box motif.

This sequence belongs to the type II topoisomerase GyrA/ParC subunit family. Heterotetramer, composed of two GyrA and two GyrB chains. In the heterotetramer, GyrA contains the active site tyrosine that forms a transient covalent intermediate with DNA, while GyrB binds cofactors and catalyzes ATP hydrolysis.

It localises to the cytoplasm. It carries out the reaction ATP-dependent breakage, passage and rejoining of double-stranded DNA.. Its activity is regulated as follows. DNA supercoiling is inhibited by the coumarin antibiotic novobiocin. Also inhibited by the fluoroquinolones ciprofloxacin and moxifloxacin. Its function is as follows. A type II topoisomerase that negatively supercoils closed circular double-stranded (ds) DNA in an ATP-dependent manner to modulate DNA topology and maintain chromosomes in an underwound state; also catalyzes the interconversion of other topological isomers of double-stranded DNA rings, including catenanes. At comparable concentrations has a stronger decatenation activity than E.coli, which is inhibited by ciprofloxacin and novobiocin. Cleaves dsDNA at the sequence 5'-AT/GGCC-3', leaving a 4 base overhang. Relaxes negatively supercoiled DNA in an ATP-independent manner. Negative supercoiling favors strand separation, and DNA replication, transcription, recombination and repair, all of which involve strand separation. Type II topoisomerases break and join 2 DNA strands simultaneously in an ATP-dependent manner. In Mycolicibacterium smegmatis (Mycobacterium smegmatis), this protein is DNA gyrase subunit A.